The chain runs to 492 residues: MAKFIMVVGTSSNSGKTVLVSGICRMLSNKGYKVAPFKSQNMSLNSRVSIEDGEIAVAQYTQAMAARSEPSVHFNPILLKPKGNFVSQVIVHGIPYEDRDYNEYRSKKDDFLDKIKQSINYLDKNYDYVVIEGAGSCCEINLLKDDIANLRVAEIAGADAILVSDIDRGGVFASIYGTVQLLPENWRNLLKGFVINKFRGNIDVLKDGFEKIEELTKIPVIGTILYDETLILPEEDSQALEGKRVFGNVKSPIEVNIVKFSKIANFTDVDPLSSDCLMKYIDFNDDITGDILILPGTRCSTVEMDLMKKHGLDKKILEFVENGGIVLGICGGYQTLGKMLIDEDFSEGDIGTISGLGLFDMETTFGNEKAIKNSTGTISIFDQNFNVTGYELHEGHSVSNETPLISLSRGFGNCGDSYDGSFKIIGNSYIFGTYFHGILENFEFRNYLVNFVRHKKNLSKIENDNYAEIFNENMDKLSKLVEESLDLSKIIK.

The region spanning P252–F444 is the GATase cobBQ-type domain. C330 functions as the Nucleophile in the catalytic mechanism. The active site involves H436.

This sequence belongs to the CobB/CobQ family. CobQ subfamily.

It participates in cofactor biosynthesis; adenosylcobalamin biosynthesis. Functionally, catalyzes amidations at positions B, D, E, and G on adenosylcobyrinic A,C-diamide. NH(2) groups are provided by glutamine, and one molecule of ATP is hydrogenolyzed for each amidation. The sequence is that of Probable cobyric acid synthase from Methanococcus maripaludis (strain C5 / ATCC BAA-1333).